The sequence spans 131 residues: Small ribosomal subunit protein uS9 (131 aa).

Positions 102 to 131 (AGFLTRDPRMKERRKYGLKKARKAPQFSKR) are disordered. Over residues 112–131 (KERRKYGLKKARKAPQFSKR) the composition is skewed to basic residues.

This sequence belongs to the universal ribosomal protein uS9 family.

The polypeptide is Small ribosomal subunit protein uS9 (Desulfitobacterium hafniense (strain DSM 10664 / DCB-2)).